Here is a 668-residue protein sequence, read N- to C-terminus: 1-deoxy-D-xylulose-5-phosphate synthase (668 aa).

Thiamine diphosphate is bound by residues His105 and Ala146–Ser148. Residue Asp177 participates in Mg(2+) binding. Residues Gly178–Ala179, Asn206, Tyr316, and Glu398 each bind thiamine diphosphate. Asn206 contacts Mg(2+).

It belongs to the transketolase family. DXPS subfamily. In terms of assembly, homodimer. The cofactor is Mg(2+). Thiamine diphosphate serves as cofactor.

It catalyses the reaction D-glyceraldehyde 3-phosphate + pyruvate + H(+) = 1-deoxy-D-xylulose 5-phosphate + CO2. Its pathway is metabolic intermediate biosynthesis; 1-deoxy-D-xylulose 5-phosphate biosynthesis; 1-deoxy-D-xylulose 5-phosphate from D-glyceraldehyde 3-phosphate and pyruvate: step 1/1. Functionally, catalyzes the acyloin condensation reaction between C atoms 2 and 3 of pyruvate and glyceraldehyde 3-phosphate to yield 1-deoxy-D-xylulose-5-phosphate (DXP). The protein is 1-deoxy-D-xylulose-5-phosphate synthase of Nitrobacter hamburgensis (strain DSM 10229 / NCIMB 13809 / X14).